The following is a 166-amino-acid chain: 2-C-methyl-D-erythritol 2,4-cyclodiphosphate synthase (166 aa).

Residues Asp-12 and His-14 each coordinate a divalent metal cation. Residues 12–14 (DSH) and 38–39 (HS) each bind 4-CDP-2-C-methyl-D-erythritol 2-phosphate. His-46 is an a divalent metal cation binding site. 4-CDP-2-C-methyl-D-erythritol 2-phosphate is bound by residues 60–62 (DIG), 65–69 (FPDTD), and Arg-146.

It belongs to the IspF family. In terms of assembly, homotrimer. A divalent metal cation is required as a cofactor.

It carries out the reaction 4-CDP-2-C-methyl-D-erythritol 2-phosphate = 2-C-methyl-D-erythritol 2,4-cyclic diphosphate + CMP. It participates in isoprenoid biosynthesis; isopentenyl diphosphate biosynthesis via DXP pathway; isopentenyl diphosphate from 1-deoxy-D-xylulose 5-phosphate: step 4/6. In terms of biological role, involved in the biosynthesis of isopentenyl diphosphate (IPP) and dimethylallyl diphosphate (DMAPP), two major building blocks of isoprenoid compounds. Catalyzes the conversion of 4-diphosphocytidyl-2-C-methyl-D-erythritol 2-phosphate (CDP-ME2P) to 2-C-methyl-D-erythritol 2,4-cyclodiphosphate (ME-CPP) with a corresponding release of cytidine 5-monophosphate (CMP). This chain is 2-C-methyl-D-erythritol 2,4-cyclodiphosphate synthase, found in Gemmatimonas aurantiaca (strain DSM 14586 / JCM 11422 / NBRC 100505 / T-27).